The following is a 1242-amino-acid chain: DNA-directed RNA polymerase RPB2 homolog (1242 aa).

A C4-type zinc finger spans residues 1180–1201 (CRNCGEPAIYNASHPIYKCMNC).

This sequence belongs to the RNA polymerase beta chain family. In terms of assembly, part of the viral DNA-directed RNA polymerase that consists of 8 polII-like subunits (RPB1, RPB2, RPB3, RPB5, RPB6, RPB7, RPB9, RPB10), a capping enzyme and a termination factor.

It is found in the host cytoplasm. It localises to the virion. The catalysed reaction is RNA(n) + a ribonucleoside 5'-triphosphate = RNA(n+1) + diphosphate. Catalytic component of the DNA-directed RNA polymerase (RNAP) that catalyzes the transcription in the cytoplasm of viral DNA into RNA using the four ribonucleoside triphosphates as substrates. Forms the polymerase active center together with RPB1. Part of the core element with the central large cleft, the clamp element that moves to open and close the cleft and the jaws that are thought to grab the incoming DNA template. This Ornithodoros (relapsing fever ticks) protein is DNA-directed RNA polymerase RPB2 homolog.